The primary structure comprises 139 residues: MLQPKRTKYRKPHNVSYEGKAKGNSYVAFGEYGLVATKGNWIDARAIESARIAISKCLGKTGKMWIRIFPHMSKTKKPLEVRMGSGKGNPEFWVAVVKQGTVMFEVANIPESQMIKALTRAGHKLPVTWKILKREEVSA.

It belongs to the universal ribosomal protein uL16 family. Part of the 50S ribosomal subunit.

Functionally, binds 23S rRNA and is also seen to make contacts with the A and possibly P site tRNAs. This Mycoplasma pneumoniae (strain ATCC 29342 / M129 / Subtype 1) (Mycoplasmoides pneumoniae) protein is Large ribosomal subunit protein uL16.